Here is a 248-residue protein sequence, read N- to C-terminus: Mannose-binding protein C (248 aa).

Residues 1–20 (MSLIPSLSLLLMSMVAASYS) form the signal peptide. The 58-residue stretch at 42-99 (GINGFPGKDGRDGTKGEKGEPGQGLRGLQGPPGKLGPPGNPGPSGSPGPKGQKGDPGK) folds into the Collagen-like domain. The interval 43–107 (INGFPGKDGR…GKSPDCDSSL (65 aa)) is disordered. Pro47 is modified (4-hydroxyproline). A compositionally biased stretch (basic and acidic residues) spans 49 to 61 (KDGRDGTKGEKGE). A 4-hydroxyproline mark is found at Pro73, Pro79, Pro82, and Pro88. Over residues 75 to 87 (KLGPPGNPGPSGS) the composition is skewed to pro residues. Over residues 93–102 (QKGDPGKSPD) the composition is skewed to basic and acidic residues. A coiled-coil region spans residues 112–130 (RKALQTEMARIKKWLTFSL). The region spanning 134–245 (VGNKFFLTNG…CSSSHLAVCE (112 aa)) is the C-type lectin domain. Disulfide bonds link Cys155-Cys244 and Cys222-Cys236.

In terms of assembly, oligomeric complex of 3 or more homotrimers. Interacts with MASP1 and MASP2. Interacts with MEP1A and MEP1B and may inhibit their catalytic activity. In terms of processing, hydroxylation on proline residues within the sequence motif, GXPG, is most likely to be 4-hydroxy as this fits the requirement for 4-hydroxylation in vertebrates.

The protein resides in the secreted. In terms of biological role, calcium-dependent lectin involved in innate immune defense. Binds mannose, fucose and N-acetylglucosamine on different microorganisms and activates the lectin complement pathway. Binds to late apoptotic cells, as well as to apoptotic blebs and to necrotic cells, but not to early apoptotic cells, facilitating their uptake by macrophages. This chain is Mannose-binding protein C (MBL2), found in Hylobates lar (Lar gibbon).